The sequence spans 556 residues: Oxygen-dependent choline dehydrogenase (556 aa).

An FAD-binding site is contributed by 6–35 (DYIIIGAGSAGNVLAARLTEDPGVTVLLLE). The Proton acceptor role is filled by histidine 475.

Belongs to the GMC oxidoreductase family. It depends on FAD as a cofactor.

It carries out the reaction choline + A = betaine aldehyde + AH2. The catalysed reaction is betaine aldehyde + NAD(+) + H2O = glycine betaine + NADH + 2 H(+). The protein operates within amine and polyamine biosynthesis; betaine biosynthesis via choline pathway; betaine aldehyde from choline (cytochrome c reductase route): step 1/1. In terms of biological role, involved in the biosynthesis of the osmoprotectant glycine betaine. Catalyzes the oxidation of choline to betaine aldehyde and betaine aldehyde to glycine betaine at the same rate. This Xanthomonas euvesicatoria pv. vesicatoria (strain 85-10) (Xanthomonas campestris pv. vesicatoria) protein is Oxygen-dependent choline dehydrogenase.